A 409-amino-acid chain; its full sequence is Immediate early response gene 5-like protein (409 aa).

2 disordered regions span residues 168 to 237 (QPPH…PSSS) and 312 to 335 (GQEE…GGTP). Pro residues predominate over residues 184-195 (QPGPAPLPPPAP). Composition is skewed to low complexity over residues 196 to 212 (AALC…CSAP) and 220 to 237 (PPTV…PSSS). The segment covering 313 to 324 (QEEEDDEEEDAG) has biased composition (acidic residues).

It belongs to the IER family.

The sequence is that of Immediate early response gene 5-like protein (Ier5l) from Rattus norvegicus (Rat).